Reading from the N-terminus, the 763-residue chain is Phosphoglycerol transferase I (763 aa).

The next 4 membrane-spanning stretches (helical) occupy residues 1–21 (MSELLSVALFLASVLIYAWKA), 26–46 (WWFAATLTVLGLFVILNITLY), 77–97 (ILPGIGIALALVAVFGALGWV), and 108–128 (VGYSLLALLLALGSVDASPAF).

Belongs to the OpgB family.

It localises to the cell inner membrane. It catalyses the reaction a phosphatidylglycerol + a membrane-derived-oligosaccharide D-glucose = a 1,2-diacyl-sn-glycerol + a membrane-derived-oligosaccharide 6-(glycerophospho)-D-glucose.. It functions in the pathway glycan metabolism; osmoregulated periplasmic glucan (OPG) biosynthesis. In terms of biological role, transfers a phosphoglycerol residue from phosphatidylglycerol to the membrane-bound nascent glucan backbones. This is Phosphoglycerol transferase I from Salmonella schwarzengrund (strain CVM19633).